Here is a 459-residue protein sequence, read N- to C-terminus: Hypotaurine/taurine--pyruvate aminotransferase (459 aa).

N6-(pyridoxal phosphate)lysine is present on lysine 287.

The protein belongs to the class-III pyridoxal-phosphate-dependent aminotransferase family. Requires pyridoxal 5'-phosphate as cofactor.

The catalysed reaction is hypotaurine + pyruvate = 2-sulfinoacetaldehyde + L-alanine. It catalyses the reaction taurine + pyruvate = sulfoacetaldehyde + L-alanine. The protein operates within organosulfur degradation. Its function is as follows. Converts hypotaurine to alanine and sulfinoacetaldehyde, which desulfinates spontaneously to acetaldehyde and sulfite. Can also catalyze the degradation of taurine into alanine and sulfoacetaldehyde, which is stable. Has 2-fold higher aminotransferase activity with hypotaurine as the substrate. The polypeptide is Hypotaurine/taurine--pyruvate aminotransferase (Paracoccus denitrificans (strain Pd 1222)).